The chain runs to 394 residues: 2-aminobenzenesulfonate 2,3-dioxygenase subunit alpha (394 aa).

The Rieske domain occupies 43-154 (WKFVCHVSEI…TETYLGLVFV (112 aa)). Positions 85, 87, 105, and 108 each coordinate [2Fe-2S] cluster. Fe cation contacts are provided by histidine 209 and histidine 213.

Belongs to the bacterial ring-hydroxylating dioxygenase alpha subunit family. Heterotetramer with a alpha2beta2 structure. [2Fe-2S] cluster serves as cofactor. The cofactor is Fe cation.

It catalyses the reaction 2-aminobenzenesulfonate + NADH + O2 + 2 H(+) = 2,3-dihydroxybenzenesulfonate + NH4(+) + NAD(+). With respect to regulation, inhibited by o-phenanthroline. Its function is as follows. Alpha subunit of the oxygenase component of the 2-aminobenzenesulfonate 2,3-dioxygenase system (deaminating) (ABSDOS). Can use 2-aminobenzenesulfonate (ABS), benzenesulfonate (BS), 4-toluenesulfonate (TS), 2-nitrobenzenesulfonate, 3- and 4-aminobenzenesulfonates, 4-chloro- and 4-hydroxybenzenesulfonates and pyridine-3-sulfonate as substrates. No desulfonation of ABS to aminocatechol or aminophenol detected. This is 2-aminobenzenesulfonate 2,3-dioxygenase subunit alpha from Alcaligenes sp.